A 63-amino-acid chain; its full sequence is Bucandin (63 aa).

5 cysteine pairs are disulfide-bonded: Cys3/Cys24, Cys6/Cys11, Cys17/Cys39, Cys43/Cys55, and Cys56/Cys61.

In terms of tissue distribution, expressed by the venom gland.

The protein resides in the secreted. Functionally, this toxin is described as enhancing presynaptic acetylcholine release, but neither experimental results, nor references to other sources are available. The sequence is that of Bucandin from Bungarus candidus (Malayan krait).